The chain runs to 279 residues: Sulfur carrier protein FdhD (279 aa).

Cys-112 functions as the Cysteine persulfide intermediate in the catalytic mechanism.

It belongs to the FdhD family.

It is found in the cytoplasm. In terms of biological role, required for formate dehydrogenase (FDH) activity. Acts as a sulfur carrier protein that transfers sulfur from IscS to the molybdenum cofactor prior to its insertion into FDH. This Nocardia farcinica (strain IFM 10152) protein is Sulfur carrier protein FdhD.